The following is a 131-amino-acid chain: Large ribosomal subunit protein bL17 (131 aa).

This sequence belongs to the bacterial ribosomal protein bL17 family. As to quaternary structure, part of the 50S ribosomal subunit. Contacts protein L32.

This Chromobacterium violaceum (strain ATCC 12472 / DSM 30191 / JCM 1249 / CCUG 213 / NBRC 12614 / NCIMB 9131 / NCTC 9757 / MK) protein is Large ribosomal subunit protein bL17.